Reading from the N-terminus, the 1004-residue chain is UPF0182 protein Mflv_4654 (1004 aa).

Transmembrane regions (helical) follow at residues 18–38, 63–83, 114–134, 176–196, 211–231, 260–280, and 288–308; these read FLIA…RFID, LVIF…GLAL, LIGI…GQSY, FVGV…FGGI, IQLI…YWFD, KLIL…AIFL, and IGVV…PLVV. Residues 896–940 show a composition bias toward low complexity; the sequence is PGADATATGPAATEPPAGQAPQTQGNNTAPPAAQPPNRQGQAPAG. Residues 896 to 960 are disordered; it reads PGADATATGP…TGPTQLSAAK (65 aa).

It belongs to the UPF0182 family.

The protein resides in the cell membrane. This chain is UPF0182 protein Mflv_4654, found in Mycolicibacterium gilvum (strain PYR-GCK) (Mycobacterium gilvum (strain PYR-GCK)).